The primary structure comprises 366 residues: Fructose-bisphosphate aldolase 2 (366 aa).

Residues arginine 60 and lysine 150 each contribute to the substrate site. Catalysis depends on glutamate 191, which acts as the Proton acceptor. Residue lysine 233 is the Schiff-base intermediate with dihydroxyacetone-P of the active site.

The protein belongs to the class I fructose-bisphosphate aldolase family.

It carries out the reaction beta-D-fructose 1,6-bisphosphate = D-glyceraldehyde 3-phosphate + dihydroxyacetone phosphate. Its pathway is carbohydrate degradation; glycolysis; D-glyceraldehyde 3-phosphate and glycerone phosphate from D-glucose: step 4/4. This Caenorhabditis elegans protein is Fructose-bisphosphate aldolase 2 (aldo-2).